A 350-amino-acid chain; its full sequence is MELKEHIIDLPKKVYIGYDIIDNIKEYILSLNLSGPFLIVTGPLVRKIITDKIIENFKDESVEVVEVKIASIDEVNKVEEMAKGSRINTIIGVGGGNIIDVAKYVAYRIGKEFVSLPTAPSHDGITSPFASIKGLGKPTSVKAKGPIAIIADINVLASAPRRLINAGIGDTIGKITAVRDWQLAAKLRGEYYGDYTASLALMSAKHALSCAKILDKDVRAGVRVLTEALISSGVAMGMAGSTRPASGSEHLFAHAIEILYPDKALHGELVALGTILMAYIHGINWKKIKKAMKKVGLPTKAKQLGIPDEIIIKALTIAHTIRPERYTILGDRGLTWEAAEKIAKETGIID.

NAD(+) is bound by residues 96–100 (GNIID) and 118–121 (TAPS). Asp-123 serves as a coordination point for substrate. Ser-127 provides a ligand contact to NAD(+). A substrate-binding site is contributed by Asp-170. Zn(2+) contacts are provided by Asp-170 and His-250. His-254 contributes to the substrate binding site. His-266 contributes to the Zn(2+) binding site.

It belongs to the glycerol-1-phosphate dehydrogenase family. In terms of assembly, homodimer. Zn(2+) is required as a cofactor.

Its subcellular location is the cytoplasm. It catalyses the reaction sn-glycerol 1-phosphate + NAD(+) = dihydroxyacetone phosphate + NADH + H(+). The enzyme catalyses sn-glycerol 1-phosphate + NADP(+) = dihydroxyacetone phosphate + NADPH + H(+). The protein operates within membrane lipid metabolism; glycerophospholipid metabolism. Functionally, catalyzes the NAD(P)H-dependent reduction of dihydroxyacetonephosphate (DHAP or glycerone phosphate) to glycerol 1-phosphate (G1P). The G1P thus generated is used as the glycerophosphate backbone of phospholipids in the cellular membranes of Archaea. In Sulfurisphaera tokodaii (strain DSM 16993 / JCM 10545 / NBRC 100140 / 7) (Sulfolobus tokodaii), this protein is Glycerol-1-phosphate dehydrogenase [NAD(P)+].